We begin with the raw amino-acid sequence, 235 residues long: 2-C-methyl-D-erythritol 4-phosphate cytidylyltransferase (235 aa).

The protein belongs to the IspD/TarI cytidylyltransferase family. IspD subfamily.

It carries out the reaction 2-C-methyl-D-erythritol 4-phosphate + CTP + H(+) = 4-CDP-2-C-methyl-D-erythritol + diphosphate. The protein operates within isoprenoid biosynthesis; isopentenyl diphosphate biosynthesis via DXP pathway; isopentenyl diphosphate from 1-deoxy-D-xylulose 5-phosphate: step 2/6. Functionally, catalyzes the formation of 4-diphosphocytidyl-2-C-methyl-D-erythritol from CTP and 2-C-methyl-D-erythritol 4-phosphate (MEP). This Pseudomonas fluorescens (strain ATCC BAA-477 / NRRL B-23932 / Pf-5) protein is 2-C-methyl-D-erythritol 4-phosphate cytidylyltransferase.